A 426-amino-acid chain; its full sequence is Enolase (426 aa).

Position 162 (Gln-162) interacts with (2R)-2-phosphoglycerate. The Proton donor role is filled by Glu-204. Positions 241, 284, and 311 each coordinate Mg(2+). Positions 336, 365, 366, and 387 each coordinate (2R)-2-phosphoglycerate. Lys-336 functions as the Proton acceptor in the catalytic mechanism.

The protein belongs to the enolase family. In terms of assembly, component of the RNA degradosome, a multiprotein complex involved in RNA processing and mRNA degradation. Mg(2+) serves as cofactor.

It localises to the cytoplasm. It is found in the secreted. The protein resides in the cell surface. The enzyme catalyses (2R)-2-phosphoglycerate = phosphoenolpyruvate + H2O. It functions in the pathway carbohydrate degradation; glycolysis; pyruvate from D-glyceraldehyde 3-phosphate: step 4/5. Its function is as follows. Catalyzes the reversible conversion of 2-phosphoglycerate (2-PG) into phosphoenolpyruvate (PEP). It is essential for the degradation of carbohydrates via glycolysis. This Hydrogenovibrio crunogenus (strain DSM 25203 / XCL-2) (Thiomicrospira crunogena) protein is Enolase.